The chain runs to 356 residues: L-Lys-D/L-Arg epimerase (356 aa).

Substrate contacts are provided by residues Thr-135 and Lys-160 to Lys-162. Mg(2+) is bound by residues Asp-190, Glu-216, and Asp-241. Substrate-binding positions include Lys-266, Asp-296, and Asp-319 to Asp-321.

It belongs to the mandelate racemase/muconate lactonizing enzyme family. Mg(2+) serves as cofactor.

Its function is as follows. Catalyzes the epimerization of L-Lys-L-Arg to L-Lys-D-Arg. Can also catalyze the epimerization of other cationic dipeptides, such as L-Arg-L-Arg, L-Lys-L-Lys and L-Lys-L-His, but with lower efficiency (in vitro). This chain is L-Lys-D/L-Arg epimerase, found in Methylococcus capsulatus (strain ATCC 33009 / NCIMB 11132 / Bath).